The primary structure comprises 714 residues: Fatty acid oxidation complex subunit alpha (714 aa).

Positions 1-190 (MEMASAFTLN…KLGLVDDVVP (190 aa)) are enoyl-CoA hydratase. Residues 306–714 (APLNSVGILG…FWKTTATDLQ (409 aa)) are 3-hydroxyacyl-CoA dehydrogenase.

This sequence in the N-terminal section; belongs to the enoyl-CoA hydratase/isomerase family. It in the central section; belongs to the 3-hydroxyacyl-CoA dehydrogenase family. As to quaternary structure, heterotetramer of two alpha chains (FadJ) and two beta chains (FadI).

The protein localises to the cytoplasm. The catalysed reaction is a (3S)-3-hydroxyacyl-CoA = a (2E)-enoyl-CoA + H2O. It carries out the reaction a 4-saturated-(3S)-3-hydroxyacyl-CoA = a (3E)-enoyl-CoA + H2O. It catalyses the reaction a (3S)-3-hydroxyacyl-CoA + NAD(+) = a 3-oxoacyl-CoA + NADH + H(+). The enzyme catalyses (3S)-3-hydroxybutanoyl-CoA = (3R)-3-hydroxybutanoyl-CoA. Its pathway is lipid metabolism; fatty acid beta-oxidation. Its function is as follows. Catalyzes the formation of a hydroxyacyl-CoA by addition of water on enoyl-CoA. Also exhibits 3-hydroxyacyl-CoA epimerase and 3-hydroxyacyl-CoA dehydrogenase activities. The chain is Fatty acid oxidation complex subunit alpha from Shigella flexneri.